The following is a 1088-amino-acid chain: MLANQANLIDNKRELEQHALVPYAQGKSIHQLFEEQAEAFPDRVAIVFENRRLSYQELNRKANQLARALLEKGVQTDSIVGVMMEKSIENVIAILAVLKAGGAYVPIDIEYPRDRIQYILQDSQTKIVLTQKSVSQLVHDVGYSGEVVVLDEEQLDARETANLHQPSKPTDLAYVIYTSGTTGKPKGTMLEHKGIANLQSFFQNSFGVTEQDRIGLFASMSFDASVWEMFMALLSGASLYILSKQTIHDFAAFEHYLSENELTIITLPPTYLTHLTPERITSLRIMITAGSASSAPLVNKWKDKLRYINAYGPTETSICATIWEAPSNQLSVQSVPIGKPIQNTHIYIVNEDLQLLPTGSEGELCIGGVGLARGYWNRPDLTAEKFVDNPFVPGEKMYRTGDLAKWLTDGTIEFLGRIDHQVKIRGHRIELGEIESVLLAHEHITEAVVIAREDQHAGQYLCAYYISQQEATPAQLRDYAAQKLPAYMLPSYFVKLDKMPLTPNDKIDRKALPEPDLTANQSQAAYHPPRTETESILVSIWQNVLGIEKIGIRDNFYSLGGDSIQAIQVVARLHSYQLKLETKDLLNYPTIEQVALFVKSTTRKSDQGIIAGNVPLTPIQKWFFGKNFTNTGHWNQSSVLYRPEGFDPKVIQSVMDKIIEHHDALRMVYQHENGNVVQHNRGLGGQLYDFFSYNLTAQPDVQQAIEAETQRLHSSMNLQEGPLVKVALFQTLHGDHLFLAIHHLVVDGISWRILFEDLATGYAQALAGQAISLPEKTDSFQSWSQWLQEYANEADLLSEIPYWESLESQAKNVSLPKDYEVTDCKQKSVRNMRIRLHPEETEQLLKHANQAYQTEINDLLLAALGLAFAEWSKLAQIVIHLEGHGREDIIEQANVARTVGWFTSQYPVLLDLKQTAPLSDYIKLTKENMRKIPRKGIGYDILKHVTLPENRGSLSFRVQPEVTFNYLGQFDADMRTELFTRSPYSGGNTLGADGKNNLSPESEVYTALNITGLIEGGELVLTFSYSSEQYREESIQQLSQSYQKHLLAIIAHCTEKKEVERTPSDFSVKGLQMEEMDDIFELLANTLR.

One can recognise a Carrier domain in the interval 528–602 (PPRTETESIL…QVALFVKSTT (75 aa)). Position 563 is an O-(pantetheine 4'-phosphoryl)serine (Ser563).

Belongs to the ATP-dependent AMP-binding enzyme family. In terms of assembly, large multienzyme complex of TycA, TycB and TycC. The cofactor is pantetheine 4'-phosphate.

It carries out the reaction L-phenylalanine + ATP + H2O = D-phenylalanine + AMP + diphosphate + H(+). It participates in antibiotic biosynthesis; tyrocidine biosynthesis. In the first step of peptide synthesis this enzyme activates phenylalanine and racemizes it to the D-isomer. The protein is Tyrocidine synthase 1 (tycA) of Brevibacillus parabrevis.